The following is a 145-amino-acid chain: tRNA-specific adenosine deaminase (145 aa).

One can recognise a CMP/dCMP-type deaminase domain in the interval Met1 to Ala116. A Zn(2+)-binding site is contributed by His48. The Proton donor role is filled by Glu50. The Zn(2+) site is built by Cys78 and Cys81.

Belongs to the cytidine and deoxycytidylate deaminase family. Homodimer. Zn(2+) serves as cofactor.

It carries out the reaction adenosine(34) in tRNA + H2O + H(+) = inosine(34) in tRNA + NH4(+). Catalyzes the deamination of adenosine to inosine at the wobble position 34 of tRNA(Arg2). In Rickettsia bellii (strain RML369-C), this protein is tRNA-specific adenosine deaminase.